A 163-amino-acid polypeptide reads, in one-letter code: Superoxide dismutase [Mn] (163 aa).

Positions 2, 50, 134, and 138 each coordinate Mn(2+).

The protein belongs to the iron/manganese superoxide dismutase family. Requires Mn(2+) as cofactor.

The catalysed reaction is 2 superoxide + 2 H(+) = H2O2 + O2. In terms of biological role, destroys superoxide anion radicals which are normally produced within the cells and which are toxic to biological systems. The chain is Superoxide dismutase [Mn] (sodA) from Mycobacterium kansasii.